The chain runs to 249 residues: MTRIDLNSDLGESFGRYTIGNDDQVLDLITAANVACGFHAGDPDVMAQTVALAETKGVAIGAHPGFPDLGGFGRRKLDMTPAEVKNMVTYQVSALMGFTKDHRLHHVKPHGALYNAAAKDLALARAICEGVAQVDDQLPLYGLAGSQLLEAAKEVGLPAYSEVFADRGYQADGSLVPRSQPNAVLTDPLAVAERALSMVQTQSVTAVTGETVPLKVDTICVHGDNQAALALVDQLRQTFTANGITIQAC.

It belongs to the LamB/PxpA family. As to quaternary structure, forms a complex composed of PxpA, PxpB and PxpC.

It carries out the reaction 5-oxo-L-proline + ATP + 2 H2O = L-glutamate + ADP + phosphate + H(+). Its function is as follows. Catalyzes the cleavage of 5-oxoproline to form L-glutamate coupled to the hydrolysis of ATP to ADP and inorganic phosphate. The polypeptide is 5-oxoprolinase subunit A (Limosilactobacillus fermentum (strain NBRC 3956 / LMG 18251) (Lactobacillus fermentum)).